The following is a 394-amino-acid chain: 12-oxophytodienoate reductase 7 (394 aa).

FMN-binding positions include 35-37 (PMT) and Q110. 189–192 (HGAH) lines the substrate pocket. Y194 functions as the Proton donor in the catalytic mechanism. R241 contacts FMN. R286 serves as a coordination point for substrate. Residues G324 and 345–346 (GR) contribute to the FMN site. Residues 392 to 394 (SRM) carry the Microbody targeting signal motif.

It belongs to the NADH:flavin oxidoreductase/NADH oxidase family. FMN is required as a cofactor.

Its subcellular location is the peroxisome. The enzyme catalyses (1S,2S)-OPC-8 + NADP(+) = (9S,13S,15Z)-12-oxophyto-10,15-dienoate + NADPH + H(+). The protein operates within lipid metabolism; oxylipin biosynthesis. In terms of biological role, involved in the biosynthesis of jasmonate (JA) and perhaps in biosynthesis or metabolism of other oxylipin signaling moleclules. In vitro, reduces cis(+)-12-oxophytodienoic acid (cis(+)-OPDA) and cis(-)-OPDA to cis(+)-OPC-8:0 and cis(-)-OPC-8:0, respectively. May be required for the spatial and temporal regulation of JA levels during dehiscence of anthers, promoting the stomium degeneration program. Involved in carbohydrate transport underlying normal lodicule function during anthesis. The polypeptide is 12-oxophytodienoate reductase 7 (Oryza sativa subsp. japonica (Rice)).